Reading from the N-terminus, the 118-residue chain is NADH-quinone oxidoreductase subunit A (118 aa).

A run of 3 helical transmembrane segments spans residues 8–28 (ILIF…LNYL), 61–81 (FMYA…YPWA), and 86–106 (VLGL…VLGL).

This sequence belongs to the complex I subunit 3 family. NDH-1 is composed of 14 different subunits. Subunits NuoA, H, J, K, L, M, N constitute the membrane sector of the complex.

Its subcellular location is the cell membrane. The enzyme catalyses a quinone + NADH + 5 H(+)(in) = a quinol + NAD(+) + 4 H(+)(out). NDH-1 shuttles electrons from NADH, via FMN and iron-sulfur (Fe-S) centers, to quinones in the respiratory chain. The immediate electron acceptor for the enzyme in this species is believed to be a menaquinone. Couples the redox reaction to proton translocation (for every two electrons transferred, four hydrogen ions are translocated across the cytoplasmic membrane), and thus conserves the redox energy in a proton gradient. The polypeptide is NADH-quinone oxidoreductase subunit A (Carboxydothermus hydrogenoformans (strain ATCC BAA-161 / DSM 6008 / Z-2901)).